Consider the following 212-residue polypeptide: MTSIADIRTDYARASLDIADVDASPLRQFRRWFDEALKAEVAEVNAMTLATVDPHGQPSARIVLLKNLDERGFTFFTNYASHKGEELAANPRAALLFHWIGLERQVRVQGIVEKVSEAESDAYYHSRPLGSRLGAWASEQSSEVPDRATLEAREAEYRQRFGDAPPRPPHWGGYRLLPERLEFWQGRPSRLHDRLEYRKHADGSWTIVRLAP.

Residues 8–11 (RTDY) and Lys-66 contribute to the substrate site. FMN is bound by residues 61-66 (RIVLLK), 76-77 (FT), Lys-83, and Gln-105. Substrate-binding residues include Tyr-123, Arg-127, and Ser-131. Residues 140 to 141 (QS) and Trp-184 each bind FMN. 190–192 (RLH) is a binding site for substrate. Residue Arg-194 coordinates FMN.

This sequence belongs to the pyridoxamine 5'-phosphate oxidase family. Homodimer. FMN serves as cofactor.

It carries out the reaction pyridoxamine 5'-phosphate + O2 + H2O = pyridoxal 5'-phosphate + H2O2 + NH4(+). The catalysed reaction is pyridoxine 5'-phosphate + O2 = pyridoxal 5'-phosphate + H2O2. It participates in cofactor metabolism; pyridoxal 5'-phosphate salvage; pyridoxal 5'-phosphate from pyridoxamine 5'-phosphate: step 1/1. Its pathway is cofactor metabolism; pyridoxal 5'-phosphate salvage; pyridoxal 5'-phosphate from pyridoxine 5'-phosphate: step 1/1. Its function is as follows. Catalyzes the oxidation of either pyridoxine 5'-phosphate (PNP) or pyridoxamine 5'-phosphate (PMP) into pyridoxal 5'-phosphate (PLP). This Ralstonia pickettii (strain 12J) protein is Pyridoxine/pyridoxamine 5'-phosphate oxidase.